Here is a 162-residue protein sequence, read N- to C-terminus: 2-C-methyl-D-erythritol 2,4-cyclodiphosphate synthase (162 aa).

The a divalent metal cation site is built by D10 and H12. Residues 10–12 and 36–37 each bind 4-CDP-2-C-methyl-D-erythritol 2-phosphate; these read DVH and HS. Residue H44 coordinates a divalent metal cation. Residues 58–60, 63–67, and R144 contribute to the 4-CDP-2-C-methyl-D-erythritol 2-phosphate site; these read DIG and FSDTD.

Belongs to the IspF family. In terms of assembly, homotrimer. It depends on a divalent metal cation as a cofactor.

The enzyme catalyses 4-CDP-2-C-methyl-D-erythritol 2-phosphate = 2-C-methyl-D-erythritol 2,4-cyclic diphosphate + CMP. The protein operates within isoprenoid biosynthesis; isopentenyl diphosphate biosynthesis via DXP pathway; isopentenyl diphosphate from 1-deoxy-D-xylulose 5-phosphate: step 4/6. Involved in the biosynthesis of isopentenyl diphosphate (IPP) and dimethylallyl diphosphate (DMAPP), two major building blocks of isoprenoid compounds. Catalyzes the conversion of 4-diphosphocytidyl-2-C-methyl-D-erythritol 2-phosphate (CDP-ME2P) to 2-C-methyl-D-erythritol 2,4-cyclodiphosphate (ME-CPP) with a corresponding release of cytidine 5-monophosphate (CMP). The protein is 2-C-methyl-D-erythritol 2,4-cyclodiphosphate synthase of Burkholderia mallei (strain NCTC 10247).